A 171-amino-acid polypeptide reads, in one-letter code: 3-hydroxydecanoyl-[acyl-carrier-protein] dehydratase (171 aa).

H70 is a catalytic residue.

It belongs to the thioester dehydratase family. FabA subfamily. In terms of assembly, homodimer.

It localises to the cytoplasm. It catalyses the reaction a (3R)-hydroxyacyl-[ACP] = a (2E)-enoyl-[ACP] + H2O. The catalysed reaction is (3R)-hydroxydecanoyl-[ACP] = (2E)-decenoyl-[ACP] + H2O. It carries out the reaction (2E)-decenoyl-[ACP] = (3Z)-decenoyl-[ACP]. It participates in lipid metabolism; fatty acid biosynthesis. In terms of biological role, necessary for the introduction of cis unsaturation into fatty acids. Catalyzes the dehydration of (3R)-3-hydroxydecanoyl-ACP to E-(2)-decenoyl-ACP and then its isomerization to Z-(3)-decenoyl-ACP. Can catalyze the dehydratase reaction for beta-hydroxyacyl-ACPs with saturated chain lengths up to 16:0, being most active on intermediate chain length. The sequence is that of 3-hydroxydecanoyl-[acyl-carrier-protein] dehydratase from Hydrogenovibrio crunogenus (strain DSM 25203 / XCL-2) (Thiomicrospira crunogena).